Here is a 331-residue protein sequence, read N- to C-terminus: 6-phosphogluconolactonase (331 aa).

Belongs to the cycloisomerase 2 family.

It carries out the reaction 6-phospho-D-glucono-1,5-lactone + H2O = 6-phospho-D-gluconate + H(+). It participates in carbohydrate degradation; pentose phosphate pathway; D-ribulose 5-phosphate from D-glucose 6-phosphate (oxidative stage): step 2/3. In terms of biological role, catalyzes the hydrolysis of 6-phosphogluconolactone to 6-phosphogluconate. The polypeptide is 6-phosphogluconolactonase (Klebsiella pneumoniae subsp. pneumoniae (strain ATCC 700721 / MGH 78578)).